We begin with the raw amino-acid sequence, 60 residues long: Three-finger toxin Mnn I (60 aa).

4 cysteine pairs are disulfide-bonded: cysteine 3/cysteine 22, cysteine 17/cysteine 39, cysteine 41/cysteine 52, and cysteine 53/cysteine 58.

Belongs to the three-finger toxin family. Short-chain subfamily. Type I alpha-neurotoxin sub-subfamily. As to expression, expressed by the venom gland.

The protein localises to the secreted. In terms of biological role, binds to muscle nicotinic acetylcholine receptor (nAChR) and inhibit acetylcholine from binding to the receptor, thereby impairing neuromuscular transmission. The sequence is that of Three-finger toxin Mnn I from Micrurus nigrocinctus (Central American coral snake).